The chain runs to 139 residues: ATP synthase epsilon chain (139 aa).

The protein belongs to the ATPase epsilon chain family. F-type ATPases have 2 components, CF(1) - the catalytic core - and CF(0) - the membrane proton channel. CF(1) has five subunits: alpha(3), beta(3), gamma(1), delta(1), epsilon(1). CF(0) has three main subunits: a, b and c.

The protein localises to the cell inner membrane. In terms of biological role, produces ATP from ADP in the presence of a proton gradient across the membrane. This is ATP synthase epsilon chain from Escherichia coli O139:H28 (strain E24377A / ETEC).